The primary structure comprises 292 residues: MEITASLVKELRERTGAGMMECKKALVENAGDIDAAAEWLRKSGLAKADKKADRVAAEGRIATAQAGGKAVLVEVNSETDFVAKDENFLAFTEVVANAALNSDAADAEALKSVKLDSGETIEERRAAVIAKVGENLQVRRLVRIDSANNVAAYVHGGRIGVLVELKGGDIELARGIAMHIAAMNPPHVKASDVPAEFVAKEKEIELAKMSEKDKAKPAEILEKIISGKISKIVNEVTLYGQPYVLNTDQTVEQAVKAAGADVIGFQRLAVGEGIEKVVEDYAAEVMKQAGLA.

The involved in Mg(2+) ion dislocation from EF-Tu stretch occupies residues 79–82 (TDFV).

It belongs to the EF-Ts family.

The protein resides in the cytoplasm. Functionally, associates with the EF-Tu.GDP complex and induces the exchange of GDP to GTP. It remains bound to the aminoacyl-tRNA.EF-Tu.GTP complex up to the GTP hydrolysis stage on the ribosome. In Xanthomonas euvesicatoria pv. vesicatoria (strain 85-10) (Xanthomonas campestris pv. vesicatoria), this protein is Elongation factor Ts.